Reading from the N-terminus, the 181-residue chain is Peptidyl-tRNA hydrolase (181 aa).

Tyr14 contacts tRNA. The Proton acceptor role is filled by His19. Phe60, Asn62, and Asn106 together coordinate tRNA.

The protein belongs to the PTH family. Monomer.

The protein localises to the cytoplasm. The catalysed reaction is an N-acyl-L-alpha-aminoacyl-tRNA + H2O = an N-acyl-L-amino acid + a tRNA + H(+). Hydrolyzes ribosome-free peptidyl-tRNAs (with 1 or more amino acids incorporated), which drop off the ribosome during protein synthesis, or as a result of ribosome stalling. Functionally, catalyzes the release of premature peptidyl moieties from peptidyl-tRNA molecules trapped in stalled 50S ribosomal subunits, and thus maintains levels of free tRNAs and 50S ribosomes. The protein is Peptidyl-tRNA hydrolase of Campylobacter curvus (strain 525.92).